Consider the following 426-residue polypeptide: Glutamate-1-semialdehyde 2,1-aminomutase (426 aa).

K268 carries the N6-(pyridoxal phosphate)lysine modification.

The protein belongs to the class-III pyridoxal-phosphate-dependent aminotransferase family. HemL subfamily. The cofactor is pyridoxal 5'-phosphate.

It localises to the cytoplasm. The enzyme catalyses (S)-4-amino-5-oxopentanoate = 5-aminolevulinate. It participates in porphyrin-containing compound metabolism; protoporphyrin-IX biosynthesis; 5-aminolevulinate from L-glutamyl-tRNA(Glu): step 2/2. The protein is Glutamate-1-semialdehyde 2,1-aminomutase of Saccharolobus islandicus (strain Y.N.15.51 / Yellowstone #2) (Sulfolobus islandicus).